We begin with the raw amino-acid sequence, 454 residues long: MLKMETVDKVDMIKNHGLTASENLEKFLKRIEAKNDDINAFLEVRGEEAIKRAEEIDARIASGKETGKLAGLVIGVKSNINVEDFNVSAASKTLENYTGSYDATVIRRIKEEDGIIIGMTNMDEFAAGSSTETSFFGPTDNPAAPGRIPGGSSGGSAAAVAAGMCDLALGSDTGGSIRNPASHCGVMGFKPTYGAVSRQGLLDLAMSFDQIGPLAADVSGISLALDVISGYDPADPTTLDSSPDLEVERELKGLRVGVVREFLEVTDEAIDEVIQGKLGAMEDEGAEIVELDFGYIDLCLPTYYLINYVEFFSATRKYDGRKYGHRIEDVCGSEVLRRIHMGSYISQKELSGKYYKRALQARSLIRREITGLLSHVDIIAGPTVPKLPHTLGEELEPMEMYAYDVLTVIANLAGIPAASIPAGDVGGVPVGLQLQAKPGDDGMIVSAMREIASL.

Catalysis depends on charge relay system residues K77 and S152. The active-site Acyl-ester intermediate is S176.

The protein belongs to the amidase family. GatA subfamily. In terms of assembly, heterotrimer of A, B and C subunits.

It catalyses the reaction L-glutamyl-tRNA(Gln) + L-glutamine + ATP + H2O = L-glutaminyl-tRNA(Gln) + L-glutamate + ADP + phosphate + H(+). In terms of biological role, allows the formation of correctly charged Gln-tRNA(Gln) through the transamidation of misacylated Glu-tRNA(Gln) in organisms which lack glutaminyl-tRNA synthetase. The reaction takes place in the presence of glutamine and ATP through an activated gamma-phospho-Glu-tRNA(Gln). In Methanothermobacter thermautotrophicus (strain ATCC 29096 / DSM 1053 / JCM 10044 / NBRC 100330 / Delta H) (Methanobacterium thermoautotrophicum), this protein is Glutamyl-tRNA(Gln) amidotransferase subunit A (gatA).